The following is a 729-amino-acid chain: Cytoplasmic polyadenylation element-binding protein 4 (729 aa).

2 disordered regions span residues 20-49 and 78-133; these read FPVRFHPHLQPPHHHQNATPSPAAFINNNT and EKAK…KEKI. The segment covering 24–35 has biased composition (basic residues); sequence FHPHLQPPHHHQ. Low complexity predominate over residues 83–96; sequence QQQEQQDPLEKQQL. Serine 97, serine 99, and serine 137 each carry phosphoserine. Residues 218-328 form a disordered region; it reads FGGSFSPQIG…RGLNGGITPL (111 aa). Over residues 232–249 the composition is skewed to basic residues; sequence HHPHHPHFQHHHSQHQQQ. A phosphoserine mark is found at serine 252 and serine 255. Residues 285–300 show a composition bias toward low complexity; it reads WSSYQSPSPTPSSSWS. Residues 301-313 are compositionally biased toward gly residues; the sequence is PGGGGYGGWGGSQ. Threonine 326 carries the phosphothreonine modification. Residues serine 330 and serine 332 each carry the phosphoserine modification. RRM domains are found at residues 472-563 and 580-662; these read RKVF…PWNL and KTIF…PYVL. The segment at 541 to 543 is RNA-binding; sequence KLY. Cysteine 667, cysteine 675, cysteine 684, cysteine 689, cysteine 694, cysteine 697, histidine 702, and histidine 710 together coordinate Zn(2+).

The protein belongs to the RRM CPEB family. As to quaternary structure, interacts with TOB1. In terms of tissue distribution, expressed in pancreas in islets and ductal cells (at protein level). Expressed in melanocytes.

The protein resides in the cytoplasm. It localises to the cell projection. The protein localises to the dendrite. It is found in the dendritic spine. Its subcellular location is the postsynaptic density. The protein resides in the axon. It localises to the growth cone. The protein localises to the endoplasmic reticulum. It is found in the perinuclear region. In terms of biological role, sequence-specific RNA-binding protein that binds to the cytoplasmic polyadenylation element (CPE), an uridine-rich sequence element (consensus sequence 5'-UUUUUAU-3') within the mRNA 3'-UTR. RNA binding results in a clear conformational change analogous to the Venus fly trap mechanism. Regulates activation of unfolded protein response (UPR) in the process of adaptation to ER stress in liver, by maintaining translation of CPE-regulated mRNAs in conditions in which global protein synthesis is inhibited. Required for cell cycle progression, specifically for cytokinesis and chromosomal segregation. Plays a role as an oncogene promoting tumor growth and progression by positively regulating translation of t-plasminogen activator/PLAT. Stimulates proliferation of melanocytes. In contrast to CPEB1 and CPEB3, does not play role in synaptic plasticity, learning and memory. The protein is Cytoplasmic polyadenylation element-binding protein 4 (CPEB4) of Homo sapiens (Human).